The chain runs to 398 residues: MNYNKKSIEDIDVKGKKVLVRCDFNVPLNEGKITDENRLVGALPTIKYLMEKGAKIILCSHMGKPKGEPKKELSLLPVAKRLSEMLNKEVIFADDDNVVGENAKKAVEDMKDGDVVLLQNTRYRKEETKNEEVFSKELASLADVFVNDAFGTAHRAHCSTVGVTNYLKEAACGYLIQKELKFLGNAVEKPERPFVAILGGAKVSDKINVINNLLDKVDTLIIGGGMGYTFLKAQGYTIGNSLVEEDKVEYSKEMIDKAKEKGVNLLLPIDNVVADKFDKDASPVVTEDQNIGEGYMGLDIGPKTAKIYSDAIKSAKTVVWNGPMGVFEFKSFANGTIEVAKAMADSDAVTIIGGGDSAAAVNILGFGDNMTHISTGGGASLEFLEGKELPGIAALNDK.

Residues D23 to N25, R38, H61 to K64, R122, and R155 contribute to the substrate site. Residues K206, G297, E328, and G354–S357 contribute to the ATP site.

It belongs to the phosphoglycerate kinase family. Monomer.

Its subcellular location is the cytoplasm. It catalyses the reaction (2R)-3-phosphoglycerate + ATP = (2R)-3-phospho-glyceroyl phosphate + ADP. It functions in the pathway carbohydrate degradation; glycolysis; pyruvate from D-glyceraldehyde 3-phosphate: step 2/5. The sequence is that of Phosphoglycerate kinase from Clostridium botulinum (strain 657 / Type Ba4).